We begin with the raw amino-acid sequence, 340 residues long: Ketol-acid reductoisomerase (NADP(+)) (340 aa).

The 183-residue stretch at 1 to 183 (MAITVYYDKD…GGGRTGIIET (183 aa)) folds into the KARI N-terminal Rossmann domain. NADP(+) contacts are provided by residues 26 to 29 (FGSQ), R49, S52, S54, and 84 to 87 (DEIQ). The active site involves H109. Residue G135 participates in NADP(+) binding. The region spanning 184–329 (TFKAETETDL…RNLRAMMPWI (146 aa)) is the KARI C-terminal knotted domain. Mg(2+)-binding residues include D192, E196, E228, and E232. Position 253 (S253) interacts with substrate.

It belongs to the ketol-acid reductoisomerase family. Mg(2+) serves as cofactor.

The enzyme catalyses (2R)-2,3-dihydroxy-3-methylbutanoate + NADP(+) = (2S)-2-acetolactate + NADPH + H(+). It catalyses the reaction (2R,3R)-2,3-dihydroxy-3-methylpentanoate + NADP(+) = (S)-2-ethyl-2-hydroxy-3-oxobutanoate + NADPH + H(+). It participates in amino-acid biosynthesis; L-isoleucine biosynthesis; L-isoleucine from 2-oxobutanoate: step 2/4. Its pathway is amino-acid biosynthesis; L-valine biosynthesis; L-valine from pyruvate: step 2/4. Its function is as follows. Involved in the biosynthesis of branched-chain amino acids (BCAA). Catalyzes an alkyl-migration followed by a ketol-acid reduction of (S)-2-acetolactate (S2AL) to yield (R)-2,3-dihydroxy-isovalerate. In the isomerase reaction, S2AL is rearranged via a Mg-dependent methyl migration to produce 3-hydroxy-3-methyl-2-ketobutyrate (HMKB). In the reductase reaction, this 2-ketoacid undergoes a metal-dependent reduction by NADPH to yield (R)-2,3-dihydroxy-isovalerate. This chain is Ketol-acid reductoisomerase (NADP(+)), found in Campylobacter jejuni subsp. doylei (strain ATCC BAA-1458 / RM4099 / 269.97).